The following is a 301-amino-acid chain: UstYa family oxidase phomYd (301 aa).

The interval 1–26 (MEKFFSPSRHNYADLSPTDVPASEES) is disordered. Residues 47–69 (VLVNRLLAASTVALVMVSLWLGW) traverse the membrane as a helical segment. Short sequence motifs (HXXHC) lie at residues 189–194 (THSVHC) and 218–222 (HTDHC). Asn-275 is a glycosylation site (N-linked (GlcNAc...) asparagine).

It belongs to the ustYa family.

The protein resides in the membrane. It participates in mycotoxin biosynthesis. Its function is as follows. UstYa family oxidase; part of the gene cluster that mediates the biosynthesis of the phomopsins, a group of hexapeptide mycotoxins which infects lupins and causes lupinosis disease in livestock. Within the pathway, phomYd catalyzes the desaturation of the Asp moiety into 2,3-dehydroaspartic acid (dAsp). The pathway starts with the processing of the precursor phomA by several endopeptidases including kexin proteases as well as the cluster-specific S41 family peptidase phomP1 and the oligopeptidase phomG to produce 10 identical copies of the hexapeptide Tyr-Val-Ile-Pro-Ile-Asp. After being excised from the precursor peptide, the core peptides are cyclized and modified post-translationally by enzymes encoded within the gene cluster. The timing and order of proteolysis of the phomA precursor and PTMs are still unknown. Two tyrosinase-like enzymes, phomQ1 and phomQ2, catalyze the chlorination and hydroxylation of Tyr, respectively. PhomYb, is proposed to be involved in the construction of the macrocyclic structure. The other 4 ustYa family proteins may be involved in PTMs that generate the unique structure of phomopsin A. PhomYa is required for the hydroxylation of C-beta of Tyr. PhomYc, phomYd, and phomYe are responsible for the biosynthesis of 2,3-dehydroisoleucine (dIle), 2,3-dehydroaspartic acid (dAsp), and 3,4-dehydroproline (dPro), respectively. While dIle formation by phomYc is indispensable for the installation of dAsp by phomYd, the order of the other PTMs have not been elucidated yet. Most of the biosynthetic enzymes likely have broad substrate specificity, and thus, there might be a metabolic grid from a precursor to phomopsin A. The enzyme(s) responsible for the biosynthesis of 3,4-dehydrovaline (dVal) have also not been identified yet. Finally, phomM acts as an S-adenosylmethionine-dependent alpha-N-methyltransferase that catalyzes two successive N-methylation reactions, converting N-desmethyl-phomopsin A to phomopsin A and phomopsin A further to an N,N-dimethylated congener called phomopsin E. The protein is UstYa family oxidase phomYd of Diaporthe leptostromiformis (Lupinosis disease fungus).